The sequence spans 203 residues: Small ribosomal subunit protein uS4 (203 aa).

The 61-residue stretch at 93–153 folds into the S4 RNA-binding domain; sequence QRLDSLVYRL…DKSKNIVPIQ (61 aa).

The protein belongs to the universal ribosomal protein uS4 family. As to quaternary structure, part of the 30S ribosomal subunit. Contacts protein S5. The interaction surface between S4 and S5 is involved in control of translational fidelity.

In terms of biological role, one of the primary rRNA binding proteins, it binds directly to 16S rRNA where it nucleates assembly of the body of the 30S subunit. With S5 and S12 plays an important role in translational accuracy. This Leuconostoc citreum (strain KM20) protein is Small ribosomal subunit protein uS4.